Here is a 340-residue protein sequence, read N- to C-terminus: Ketol-acid reductoisomerase (NADP(+)) (340 aa).

Residues 3 to 182 (VQMEYEKDVK…GAARVGLLET (180 aa)) enclose the KARI N-terminal Rossmann domain. NADP(+) is bound by residues 26 to 29 (YGSQ), Arg49, Ser53, and 83 to 86 (DEIQ). His108 is an active-site residue. Gly134 is an NADP(+) binding site. Residues 183 to 328 (TYKEETEEDL…AELRKAMPFV (146 aa)) form the KARI C-terminal knotted domain. Asp191, Glu195, Glu227, and Glu231 together coordinate Mg(2+). Substrate is bound at residue Ser252.

This sequence belongs to the ketol-acid reductoisomerase family. The cofactor is Mg(2+).

It catalyses the reaction (2R)-2,3-dihydroxy-3-methylbutanoate + NADP(+) = (2S)-2-acetolactate + NADPH + H(+). The enzyme catalyses (2R,3R)-2,3-dihydroxy-3-methylpentanoate + NADP(+) = (S)-2-ethyl-2-hydroxy-3-oxobutanoate + NADPH + H(+). Its pathway is amino-acid biosynthesis; L-isoleucine biosynthesis; L-isoleucine from 2-oxobutanoate: step 2/4. It participates in amino-acid biosynthesis; L-valine biosynthesis; L-valine from pyruvate: step 2/4. Functionally, involved in the biosynthesis of branched-chain amino acids (BCAA). Catalyzes an alkyl-migration followed by a ketol-acid reduction of (S)-2-acetolactate (S2AL) to yield (R)-2,3-dihydroxy-isovalerate. In the isomerase reaction, S2AL is rearranged via a Mg-dependent methyl migration to produce 3-hydroxy-3-methyl-2-ketobutyrate (HMKB). In the reductase reaction, this 2-ketoacid undergoes a metal-dependent reduction by NADPH to yield (R)-2,3-dihydroxy-isovalerate. This Streptococcus gordonii (strain Challis / ATCC 35105 / BCRC 15272 / CH1 / DL1 / V288) protein is Ketol-acid reductoisomerase (NADP(+)).